Reading from the N-terminus, the 93-residue chain is NAD(P)H-quinone oxidoreductase subunit 4L, chloroplastic (93 aa).

Transmembrane regions (helical) follow at residues 1–21 (MLEHALIAGAFSFCIGISGLI) and 60–80 (IFAIFVIAIAAAEAAIGLSIA).

The protein belongs to the complex I subunit 4L family. NDH is composed of at least 16 different subunits, 5 of which are encoded in the nucleus.

The protein localises to the plastid. Its subcellular location is the chloroplast thylakoid membrane. The enzyme catalyses a plastoquinone + NADH + (n+1) H(+)(in) = a plastoquinol + NAD(+) + n H(+)(out). The catalysed reaction is a plastoquinone + NADPH + (n+1) H(+)(in) = a plastoquinol + NADP(+) + n H(+)(out). NDH shuttles electrons from NAD(P)H:plastoquinone, via FMN and iron-sulfur (Fe-S) centers, to quinones in the photosynthetic chain and possibly in a chloroplast respiratory chain. The immediate electron acceptor for the enzyme in this species is believed to be plastoquinone. Couples the redox reaction to proton translocation, and thus conserves the redox energy in a proton gradient. The protein is NAD(P)H-quinone oxidoreductase subunit 4L, chloroplastic of Anthoceros angustus (Hornwort).